We begin with the raw amino-acid sequence, 68 residues long: uncharacterized protein (68 aa).

Positions 1–68 are disordered; it reads METIIRRFSP…GNSKNIKTKK (68 aa). Basic and acidic residues predominate over residues 9-34; the sequence is SPKEKEKEKEKEEKDEKSKDKKEPIK. Residues 42–51 show a composition bias toward acidic residues; it reads DEEEEEDEQE.

This is an uncharacterized protein from Dictyostelium discoideum (Social amoeba).